Here is an 841-residue protein sequence, read N- to C-terminus: MPPRCPFLRHLFFLLLLLSPWIMSPCGGAADDVTYPIVPSSPGRRSILQIRREPPTEPNTKLVVDRDGKVFLKQQPKETPYWSFSTGSPMHSLYQAPANNNTENATEITRPHIIVEYLNNSKAATTVDGYHNWTVQEFFRQKPLVTDDGVTLGSETTSAYLVDGRSGRLIHVYKSTGDTKITNALVKPASTEDFVNEPLLIRRTDSKLEHFSKTTGKLVWNLTVSHFRAALLCDPVFNSGYDLGPKLQTGIYMPLLCGSQIDVRGPEIVIRVLHDQPMNVKMLPSPSLNHFESENSIMPFGKARESRKLQEQHKQKYTYLFGQWSPVKLLAPLVLLGVVVSVFIKKFSSRGSDVSLKAGPSKKKKNRKSAKDTNRQSVPRGQDQFELIEGGQMLLGFNNFQSGATDGRKIGKLFLSSKEIAKGSNGTVVFEGIYEGRPVAVKRLVRSHHEVAFKEIQNLIASDQHTNIIRWYGVEYDQDFVYLSLERCTCSLDDLIKSYLEFSMTKVLENNDSTEGVAAYKIQLDSLEGVIKGNNFWKVGGHPSPLMLKLMRDIVCGIVHLHELGIVHRDLKPQNVLISKDMTLSAKLSDMGISKRMSRDMSSLGHLATGSGSSGWQAPEQLLQGRQTRAVDMFSLGCVIFYTITGCKHPFGDDLERDVNIVKNKVDLFLVEHVPEASDLISRLLNPDPDLRPSATEVLLHPMFWNSEMRLSFLRDASDRVELENREADSEILKAMESTAPVAIGGKWDEKLEPVFITNIGRYRRYKYDSIRDLLRVIRNKLNHHRELPPEIQELVGTVPEGFDEYFAVRFPKLLIEVYRVISLHCREEEVFRKYFKCDII.

The N-terminal stretch at 1 to 30 (MPPRCPFLRHLFFLLLLLSPWIMSPCGGAA) is a signal peptide. Residues 31–323 (DDVTYPIVPS…KQKYTYLFGQ (293 aa)) lie on the Lumenal side of the membrane. N100, N104, N119, N132, and N221 each carry an N-linked (GlcNAc...) asparagine glycan. A helical membrane pass occupies residues 324 to 344 (WSPVKLLAPLVLLGVVVSVFI). Residues 345-841 (KKFSSRGSDV…FRKYFKCDII (497 aa)) lie on the Cytoplasmic side of the membrane. A disordered region spans residues 352-382 (SDVSLKAGPSKKKKNRKSAKDTNRQSVPRGQ). One can recognise a Protein kinase domain in the interval 414–704 (FLSSKEIAKG…ATEVLLHPMF (291 aa)). ATP contacts are provided by residues 420–428 (IAKGSNGTV) and K442. D570 acts as the Proton acceptor in catalysis. The KEN domain maps to 707 to 838 (SEMRLSFLRD…EEVFRKYFKC (132 aa)).

Belongs to the protein kinase superfamily. Ser/Thr protein kinase family. As to quaternary structure, homodimer; disulfide-linked. Dimer formation is driven by hydrophobic interactions within the N-terminal luminal domains and stabilized by disulfide bridges. Mg(2+) is required as a cofactor. Post-translationally, autophosphorylated. In terms of tissue distribution, ubiquitous. Detected in the vascular bundles of young plants, leaves, roots, seedlings and in the receptacles of flowers and vascular bundles of the petals.

It is found in the endoplasmic reticulum membrane. The catalysed reaction is L-seryl-[protein] + ATP = O-phospho-L-seryl-[protein] + ADP + H(+). It carries out the reaction L-threonyl-[protein] + ATP = O-phospho-L-threonyl-[protein] + ADP + H(+). Its activity is regulated as follows. The kinase domain is activated by trans-autophosphorylation. Kinase activity is required for activation of the endoribonuclease domain. Its function is as follows. Senses unfolded proteins in the lumen of the endoplasmic reticulum via its N-terminal domain which leads to enzyme auto-activation. The active endoribonuclease domain splices bZIP60 mRNA to generate a new C-terminus, converting it into a potent unfolded-protein response transcriptional activator which then induces transcription of UPR target genes. Involved in organ growth regulation. Plays a role in plant immunity and abiotic stress responses. This is Serine/threonine-protein kinase/endoribonuclease IRE1a (IRE1A) from Arabidopsis thaliana (Mouse-ear cress).